The sequence spans 311 residues: tRNA-cytidine(32) 2-sulfurtransferase (311 aa).

Positions 47 to 52 (SGGKDS) match the PP-loop motif motif. [4Fe-4S] cluster is bound by residues C122, C125, and C213.

Belongs to the TtcA family. As to quaternary structure, homodimer. Mg(2+) serves as cofactor. Requires [4Fe-4S] cluster as cofactor.

The protein resides in the cytoplasm. The enzyme catalyses cytidine(32) in tRNA + S-sulfanyl-L-cysteinyl-[cysteine desulfurase] + AH2 + ATP = 2-thiocytidine(32) in tRNA + L-cysteinyl-[cysteine desulfurase] + A + AMP + diphosphate + H(+). It participates in tRNA modification. Its function is as follows. Catalyzes the ATP-dependent 2-thiolation of cytidine in position 32 of tRNA, to form 2-thiocytidine (s(2)C32). The sulfur atoms are provided by the cysteine/cysteine desulfurase (IscS) system. The sequence is that of tRNA-cytidine(32) 2-sulfurtransferase from Escherichia coli O127:H6 (strain E2348/69 / EPEC).